Reading from the N-terminus, the 305-residue chain is tRNA uridine(34) hydroxylase (305 aa).

One can recognise a Rhodanese domain in the interval 125 to 219; it reads ADENTVVVDT…YLEEVPREQS (95 aa). Residue C179 is the Cysteine persulfide intermediate of the active site.

This sequence belongs to the TrhO family.

It carries out the reaction uridine(34) in tRNA + AH2 + O2 = 5-hydroxyuridine(34) in tRNA + A + H2O. Catalyzes oxygen-dependent 5-hydroxyuridine (ho5U) modification at position 34 in tRNAs. The chain is tRNA uridine(34) hydroxylase from Brucella suis (strain ATCC 23445 / NCTC 10510).